We begin with the raw amino-acid sequence, 925 residues long: Probable glycoprotein hormone G-protein coupled receptor (925 aa).

An N-terminal signal peptide occupies residues 1 to 27 (MEDRGICPRVLQVLFLVVLILISPVYA). At 28-529 (AKNDACTKCS…EDIMGYVWLT (502 aa)) the chain is on the extracellular side. Asn61 carries N-linked (GlcNAc...) asparagine glycosylation. LRR repeat units follow at residues 85-106 (KLKY…RVKN), 110-131 (SLIT…AFDD), 134-155 (QLTQ…NKTS), 156-180 (SVTK…GNLP), 181-202 (SLEN…IFRQ), 203-224 (NTRL…NEDA), 230-250 (SLKT…RGLK), and 251-273 (NLHF…DSIR). Asn152 carries an N-linked (GlcNAc...) asparagine glycan. Residue Asn212 is glycosylated (N-linked (GlcNAc...) asparagine). The interval 299–493 (TMQKPSTEEN…PTLIPHSNHT (195 aa)) is disordered. Over residues 301-318 (QKPSTEENNGQTTASSPT) the composition is skewed to polar residues. The stretch at 333–349 (STQPHTTSGFGGGGFPG) is one 1; truncated repeat. A 5 X approximate tandem repeats region spans residues 333–461 (STQPHTTSGF…PGGGGFPGGG (129 aa)). A compositionally biased stretch (gly residues) spans 341–362 (GFGGGGFPGGGGGFPGGGGFPA). 3 consecutive repeat copies span residues 350–384 (GGGG…GFPG), 385–419 (GGGG…GFPG), and 420–453 (GGGG…GFPG). Residues 365–375 (SKTSTQPHTTS) are compositionally biased toward polar residues. The segment covering 376–397 (GFGGGGFPGGGGGFPGGGGFPA) has biased composition (gly residues). Residues 400 to 410 (SKTSTQPHTTS) show a composition bias toward polar residues. Residues 411–432 (GFGGGGFPGGGGGFPGGGGFPG) show a composition bias toward gly residues. The span at 434 to 445 (SNTSTQPHTTSN) shows a compositional bias: polar residues. N-linked (GlcNAc...) asparagine glycosylation occurs at Asn435. A compositionally biased stretch (gly residues) spans 446–462 (SGGGGFPGGGGFPGGGT). Residues 454–461 (GGGFPGGG) form a 5; truncated repeat. The segment covering 476–493 (VHQSTADPPTLIPHSNHT) has biased composition (polar residues). Asn495 carries N-linked (GlcNAc...) asparagine glycosylation. The chain crosses the membrane as a helical span at residues 530–551 (VVSFMVGAVALVANLVVALVLL). Over 552 to 561 (TSQRRLNVTR) the chain is Cytoplasmic. The helical transmembrane segment at 562-584 (FLMCNLAFADFILGLYIFILTSV) threads the bilayer. Residues 585–606 (SAVTRGDYHNYVQQWQNGAGCK) lie on the Extracellular side of the membrane. A helical membrane pass occupies residues 607-628 (ILGFLAVFSSELSLFTLVMMTI). The Cytoplasmic portion of the chain corresponds to 629–651 (ERFYAIVHAMHMNARLSFRKTVR). The chain crosses the membrane as a helical span at residues 652-673 (FMIGGWIFALVMAVVPLTGVSG). The Extracellular portion of the chain corresponds to 674–691 (YSKVAICLPFDVSDATST). The helical transmembrane segment at 692–712 (AYVAFLLLVNGASFISVMYLY) threads the bilayer. The Cytoplasmic portion of the chain corresponds to 713–739 (SRMLYVVVSGGDMEGAPKRNDSKVAKR). A helical membrane pass occupies residues 740–763 (MAILVFTDMLCWAPIAFFGLLAAF). At 764 to 774 (GQTLLTVTQSK) the chain is on the extracellular side. The chain crosses the membrane as a helical span at residues 775–795 (ILLVFFFPINSICNPFLYAFF). Topologically, residues 796–925 (TKAFKRELFT…QKQKILQSPS (130 aa)) are cytoplasmic. Positions 904–925 (VTKSSSPPHLKLQKQKILQSPS) are disordered.

Belongs to the G-protein coupled receptor 1 family. FSH/LSH/TSH subfamily.

Its subcellular location is the cell membrane. In terms of biological role, probable receptor for a glycoprotein hormone. In Anthopleura elegantissima (Green aggregating anemone), this protein is Probable glycoprotein hormone G-protein coupled receptor.